Reading from the N-terminus, the 228-residue chain is Uracil-DNA glycosylase (228 aa).

Residue aspartate 71 is the Proton acceptor of the active site.

It belongs to the uracil-DNA glycosylase (UDG) superfamily. UNG family.

The protein resides in the cytoplasm. It catalyses the reaction Hydrolyzes single-stranded DNA or mismatched double-stranded DNA and polynucleotides, releasing free uracil.. Functionally, excises uracil residues from the DNA which can arise as a result of misincorporation of dUMP residues by DNA polymerase or due to deamination of cytosine. In Thermobifida fusca (strain YX), this protein is Uracil-DNA glycosylase.